Consider the following 102-residue polypeptide: Small ribosomal subunit protein uS10 (102 aa).

The protein belongs to the universal ribosomal protein uS10 family. In terms of assembly, part of the 30S ribosomal subunit.

In terms of biological role, involved in the binding of tRNA to the ribosomes. The protein is Small ribosomal subunit protein uS10 of Streptococcus thermophilus (strain ATCC BAA-250 / LMG 18311).